Consider the following 163-residue polypeptide: 6,7-dimethyl-8-ribityllumazine synthase (163 aa).

Residues Phe-22, 56–58 (TFE), and 80–82 (AVI) contribute to the 5-amino-6-(D-ribitylamino)uracil site. Residue 85–86 (GT) participates in (2S)-2-hydroxy-3-oxobutyl phosphate binding. His-88 (proton donor) is an active-site residue. Residue Met-113 participates in 5-amino-6-(D-ribitylamino)uracil binding. Arg-127 is a binding site for (2S)-2-hydroxy-3-oxobutyl phosphate.

Belongs to the DMRL synthase family.

The catalysed reaction is (2S)-2-hydroxy-3-oxobutyl phosphate + 5-amino-6-(D-ribitylamino)uracil = 6,7-dimethyl-8-(1-D-ribityl)lumazine + phosphate + 2 H2O + H(+). Its pathway is cofactor biosynthesis; riboflavin biosynthesis; riboflavin from 2-hydroxy-3-oxobutyl phosphate and 5-amino-6-(D-ribitylamino)uracil: step 1/2. Catalyzes the formation of 6,7-dimethyl-8-ribityllumazine by condensation of 5-amino-6-(D-ribitylamino)uracil with 3,4-dihydroxy-2-butanone 4-phosphate. This is the penultimate step in the biosynthesis of riboflavin. This chain is 6,7-dimethyl-8-ribityllumazine synthase, found in Anaeromyxobacter sp. (strain Fw109-5).